Here is a 235-residue protein sequence, read N- to C-terminus: Modulator of macroautophagy TMEM150B (235 aa).

The Cytoplasmic portion of the chain corresponds to 1 to 8 (MWGYLSLL). Residues 9–29 (PMCLAFWAIAGIWTVFSLAVV) traverse the membrane as a helical segment. Topologically, residues 30 to 51 (NKAVNLTDGFPYISVCGNVPPQ) are extracellular. A glycan (N-linked (GlcNAc...) asparagine) is linked at Asn-34. The chain crosses the membrane as a helical span at residues 52–72 (SCIFSQVLNIGAASAAWICIL). Residues 73–88 (RYYQLRDWGVRKWHNQ) lie on the Cytoplasmic side of the membrane. The chain crosses the membrane as a helical span at residues 89 to 109 (VILWTGLLCALGTSIVGNFQE). Topologically, residues 110–116 (KNQRATH) are extracellular. A helical membrane pass occupies residues 117 to 137 (LTGAFLAFFVGIVYFWLQLFL). Residues 138 to 156 (SWRMKNLPQPGAPWIGPLR) lie on the Cytoplasmic side of the membrane. A helical transmembrane segment spans residues 157 to 177 (LVLCSACFILEVAMVVLHSWS). At 178 to 180 (MRS) the chain is on the extracellular side. A helical transmembrane segment spans residues 181 to 201 (VSAICEWVAAMLLFILFGLLA). Residues 202 to 235 (VDFSRLDSCTLCLQPGSGSLRPPPDSPTSLHVQL) lie on the Cytoplasmic side of the membrane.

This sequence belongs to the DRAM/TMEM150 family.

It localises to the cell membrane. The protein localises to the endosome membrane. Its subcellular location is the cytoplasmic vesicle. It is found in the autophagosome membrane. Its function is as follows. Modulator of macroautophagy that causes accumulation of autophagosomes under basal conditions and enhances autophagic flux. Represses cell death and promotes long-term clonogenic survival of cells grown in the absence of glucose in a macroautophagy-independent manner. May have some role in extracellular matrix engulfment or growth factor receptor recycling, both of which can modulate cell survival. This is Modulator of macroautophagy TMEM150B from Bos taurus (Bovine).